Here is a 289-residue protein sequence, read N- to C-terminus: uncharacterized protein (289 aa).

The next 9 helical transmembrane spans lie at 13–32, 37–59, 80–99, 104–121, 141–160, 165–183, 203–225, 235–252, and 265–287; these read INFAYPIPLLSLLAFMLSGS, LIISYIFAFSFFTAANLWNHLND, IVTEFVVAFYFVSFLLIFFI, EIALLLTGLSVVLTWLYS, VFTYILCSFSFPLSFWTIFS, VGVVFTLATGFTYLSGFFL, VLSPSTLLIISVMLFIASTFVVI, TSSLLVLTVYPPILFAIY, and IISSLKIYTYSYLGFLIAFAIGC.

It localises to the cell membrane. This is an uncharacterized protein from Archaeoglobus fulgidus (strain ATCC 49558 / DSM 4304 / JCM 9628 / NBRC 100126 / VC-16).